The primary structure comprises 162 residues: Proepiregulin (162 aa).

Residues 1–22 form the signal peptide; that stretch reads METLPASWVLTLLCLGSHLLQA. Residues 23 to 55 constitute a propeptide that is removed on maturation; it reads VISTTVIPSCIPGESEDNCTALVQMEDDPRVAQ. Asn40 is a glycosylation site (N-linked (GlcNAc...) asparagine). The Extracellular portion of the chain corresponds to 53–112; sequence VAQVQITKCSSDMDGYCLHGQCIYLVDMREKFCRCEVGYTGLRCEHFFLTVHQPLSKEYV. The EGF-like domain occupies 57 to 97; that stretch reads QITKCSSDMDGYCLHGQCIYLVDMREKFCRCEVGYTGLRCE. Cystine bridges form between Cys61-Cys74, Cys69-Cys85, and Cys87-Cys96. Positions 102–162 are cleaved as a propeptide — removed in mature form; it reads TVHQPLSKEY…TSGDPVLPQV (61 aa). The helical transmembrane segment at 113–133 threads the bilayer; sequence ALTVILIFLFLIITAGCIYYF. Over 134-162 the chain is Cytoplasmic; sequence CRWYKNRKSKKSREEYERVTSGDPVLPQV.

As to quaternary structure, interacts with EGFR and ERBB4.

It is found in the secreted. Its subcellular location is the extracellular space. The protein localises to the cell membrane. Functionally, ligand of the EGF receptor/EGFR and ERBB4. Stimulates EGFR and ERBB4 tyrosine phosphorylation. Contributes to inflammation, wound healing, tissue repair, and oocyte maturation by regulating angiogenesis and vascular remodeling and by stimulating cell proliferation. This is Proepiregulin (Ereg) from Mus musculus (Mouse).